The sequence spans 263 residues: Uroporphyrinogen-III C-methyltransferase (263 aa).

S-adenosyl-L-homocysteine is bound by residues Pro20, 96–98 (GGD), 126–127 (TA), Met180, and Ala237.

Belongs to the precorrin methyltransferase family.

The catalysed reaction is uroporphyrinogen III + 2 S-adenosyl-L-methionine = precorrin-2 + 2 S-adenosyl-L-homocysteine + H(+). The protein operates within cofactor biosynthesis; adenosylcobalamin biosynthesis; precorrin-2 from uroporphyrinogen III: step 1/1. It participates in porphyrin-containing compound metabolism; siroheme biosynthesis; precorrin-2 from uroporphyrinogen III: step 1/1. Functionally, catalyzes the two successive C-2 and C-7 methylation reactions involved in the conversion of uroporphyrinogen III to precorrin-2 via the intermediate formation of precorrin-1. It is a step in the biosynthesis of both cobalamin (vitamin B12) and siroheme. This is Uroporphyrinogen-III C-methyltransferase (cobA) from Synechocystis sp. (strain ATCC 27184 / PCC 6803 / Kazusa).